Reading from the N-terminus, the 955-residue chain is Valine--tRNA ligase (955 aa).

The 'HIGH' region motif lies at P41–H51. A 'KMSKS' region motif is present at residues K554–S558. Position 557 (K557) interacts with ATP. Residues Q926–K946 adopt a coiled-coil conformation.

The protein belongs to the class-I aminoacyl-tRNA synthetase family. ValS type 1 subfamily. Monomer.

The protein resides in the cytoplasm. The enzyme catalyses tRNA(Val) + L-valine + ATP = L-valyl-tRNA(Val) + AMP + diphosphate. Functionally, catalyzes the attachment of valine to tRNA(Val). As ValRS can inadvertently accommodate and process structurally similar amino acids such as threonine, to avoid such errors, it has a 'posttransfer' editing activity that hydrolyzes mischarged Thr-tRNA(Val) in a tRNA-dependent manner. The protein is Valine--tRNA ligase of Buchnera aphidicola subsp. Acyrthosiphon pisum (strain APS) (Acyrthosiphon pisum symbiotic bacterium).